The following is a 737-amino-acid chain: Angiotensin-converting enzyme-like protein Ace3 (737 aa).

Positions 1–23 are cleaved as a signal peptide; the sequence is MNLPWALLLVLLSHRQLLPWLRT. Over 24–639 the chain is Extracellular; the sequence is VGETSLNDFY…TDTEPEQAYL (616 aa). Residues 32–611 form the Peptidase M2 domain; it reads FYSEAQAKLF…VKQGDTLGWP (580 aa). Cys146 and Cys152 are joined by a disulfide. Positions 180 and 218 each coordinate chloride. Cys346 and Cys364 are joined by a disulfide. 2 residues coordinate Zn(2+): His377 and His381. The N-linked (GlcNAc...) asparagine glycan is linked to Asn390. Residue Glu405 participates in Zn(2+) binding. 3 residues coordinate chloride: Trp479, Arg483, and Arg516. A disulfide bond links Cys532 and Cys544. Residues 640–660 form a helical membrane-spanning segment; sequence GQWVLLSMSFFMLVLILALGF. Residues 661-700 are Cytoplasmic-facing; that stretch reads RLHYLEKQLLDEDTMILKTLPYSYFLGIAMEPHQAARKQW. The helical transmembrane segment at 701-721 threads the bilayer; it reads LLLGLCCILMLCCIGLLIRIV. Over 722 to 737 the chain is Extracellular; it reads TQNTENTPWMKNEGQS.

It belongs to the peptidase M2 family. As to quaternary structure, interacts with IZUMO1. It depends on Zn(2+) as a cofactor. In terms of tissue distribution, expressed in sperm and testis (at protein level). Expressed in heart and testis. Not detected in kidney, lung, liver, brain, ovary, spleen and thymus.

Its subcellular location is the cytoplasmic vesicle. It is found in the secretory vesicle. The protein resides in the acrosome membrane. The protein is Angiotensin-converting enzyme-like protein Ace3 of Mus musculus (Mouse).